The sequence spans 502 residues: Pyruvate kinase (502 aa).

Residue R54 coordinates substrate. 4 residues coordinate K(+): N56, S58, D88, and T89. 56-59 contributes to the ATP binding site; that stretch reads NFSH. ATP-binding residues include R95 and K184. E252 is a binding site for Mg(2+). Substrate contacts are provided by G275, D276, and T308. Mg(2+) is bound at residue D276.

It belongs to the pyruvate kinase family. As to quaternary structure, homotetramer. It depends on Mg(2+) as a cofactor. The cofactor is K(+).

The enzyme catalyses pyruvate + ATP = phosphoenolpyruvate + ADP + H(+). It functions in the pathway carbohydrate degradation; glycolysis; pyruvate from D-glyceraldehyde 3-phosphate: step 5/5. Its activity is regulated as follows. Regulated by phosphoenolpyruvate substrate and is allosterically activated by ribose-5-phosphate, AMP and other nucleoside monophosphates but not by fructose-1,6-bisphosphate. This Lactococcus lactis subsp. lactis (strain IL1403) (Streptococcus lactis) protein is Pyruvate kinase (pyk).